The sequence spans 756 residues: 1-phosphatidylinositol 4,5-bisphosphate phosphodiesterase delta-1 (756 aa).

The PH domain occupies 21-130 (ALLKGSQLLK…WVLGLHKIIH (110 aa)). Positions 30–57 (KVKSSSWRRERFYKLQEDCKTIWQESRK) are substrate binding. EF-hand domains lie at 140–175 (KLQHWIHSCLRKADKNKDNKMSFKELQNFLKELNIQ) and 176–211 (VDDSYARKIFRECDHSQTDSLEDEEIEAFYKMLTQR). Residues Asp-153, Asn-155, Asp-157, Lys-159, Glu-164, Asp-189, Ser-191, Thr-193, Ser-195, and Glu-200 each coordinate Ca(2+). Ser-191 carries an O-linked (GlcNAc) serine glycan. Thr-193 carries O-linked (GlcNAc) threonine glycosylation. Positions 296–440 (QDMGQPLSHY…LKGKILLKGK (145 aa)) constitute a PI-PLC X-box domain. The active site involves His-311. Residues Asn-312, Glu-341, and Asp-343 each contribute to the Ca(2+) site. The active site involves His-356. Glu-390 is a binding site for Ca(2+). Substrate is bound by residues Lys-438 and Lys-440. Position 457 is a phosphothreonine (Thr-457). A Phosphoserine modification is found at Ser-460. The region spanning 492-609 (LSDMVIYCKS…GYVLKPAFLR (118 aa)) is the PI-PLC Y-box domain. Substrate is bound by residues Ser-522 and Arg-549. Residues 611–737 (PNGTFNPRAL…QGYRHVHLMS (127 aa)) form the C2 domain. Ca(2+)-binding residues include Ile-651, Asp-653, Asn-677, Asp-706, Tyr-707, and Asp-708.

In terms of assembly, interacts with TGM2. Ca(2+) serves as cofactor. As to expression, strongly expressed in lung, liver and heart. Also expressed at least in pancreas, kidney, skeletal muscle, placenta and brain.

The catalysed reaction is a 1,2-diacyl-sn-glycero-3-phospho-(1D-myo-inositol-4,5-bisphosphate) + H2O = 1D-myo-inositol 1,4,5-trisphosphate + a 1,2-diacyl-sn-glycerol + H(+). The enzyme catalyses a 1,2-diacyl-sn-glycero-3-phospho-(1D-myo-inositol) + H2O = 1D-myo-inositol 1-phosphate + a 1,2-diacyl-sn-glycerol + H(+). Functionally, the production of the second messenger molecules diacylglycerol (DAG) and inositol 1,4,5-trisphosphate (IP3) is mediated by activated phosphatidylinositol-specific phospholipase C enzymes. Essential for trophoblast and placental development. Binds phosphatidylinositol 4,5-bisphosphate. The sequence is that of 1-phosphatidylinositol 4,5-bisphosphate phosphodiesterase delta-1 from Homo sapiens (Human).